The following is a 191-amino-acid chain: MAAPRGRAAPWTTALLLLLASQVLSPGSCADEEEVPEEWVLLHVVQGQIGAGNYSYLRLNHEGKIVLRMRSLKGDADLYVSASSLHPSFDDYELQSATCGPDAVSIPAHFRRPVGIGVYGHPSHLESEFEMKVYYDGTVEQHPFGEAAYPADGADAGQKHAGAPEDASQEEESVLWTILISILKLVLEILF.

The first 30 residues, 1 to 30 (MAAPRGRAAPWTTALLLLLASQVLSPGSCA), serve as a signal peptide directing secretion. An N-linked (GlcNAc...) asparagine glycan is attached at asparagine 53.

Belongs to the UPF0669 family. In terms of tissue distribution, mainly expressed in hepatocytes and some weak expression in germinal center cells of lymph nodes.

The protein localises to the secreted. Its function is as follows. May be involved in induction of apoptosis in CD4(+) T-cells, but not CD8(+) T-cells or hepatocytes. The sequence is that of UPF0669 protein C6orf120 (C6orf120) from Homo sapiens (Human).